We begin with the raw amino-acid sequence, 1633 residues long: Laminin-like protein lam-2 (1633 aa).

Positions 1 to 19 (MTSILWLFSLAVLWHMGQP) are cleaved as a signal peptide. In terms of domain architecture, Laminin N-terminal spans 47–286 (QPQRCVPDFV…AISDFAVGGR (240 aa)). Asparagine 116 and asparagine 136 each carry an N-linked (GlcNAc...) asparagine glycan. 16 disulfides stabilise this stretch: cysteine 287–cysteine 296, cysteine 289–cysteine 310, cysteine 312–cysteine 321, cysteine 324–cysteine 344, cysteine 347–cysteine 356, cysteine 349–cysteine 372, cysteine 375–cysteine 384, cysteine 387–cysteine 400, cysteine 403–cysteine 415, cysteine 405–cysteine 421, cysteine 423–cysteine 432, cysteine 435–cysteine 447, cysteine 450–cysteine 464, cysteine 452–cysteine 471, cysteine 473–cysteine 482, and cysteine 485–cysteine 500. 4 consecutive Laminin EGF-like domains span residues 287–346 (CKCN…ECIA), 347–402 (CNCS…YCVA), 403–449 (CGCN…GCKN), and 450–502 (CGCE…GCTP). Asparagine 348 carries an N-linked (GlcNAc...) asparagine glycan. One can recognise a Laminin EGF-like 5; first part domain in the interval 503–512 (CFCFGHSSIC). Asparagine 522, asparagine 658, and asparagine 740 each carry an N-linked (GlcNAc...) asparagine glycan. The region spanning 529–701 (QDKQKWAGQN…NPKQATWIEH (173 aa)) is the Laminin IV type A domain. The Laminin EGF-like 5; second part domain occupies 702–747 (CECLPGFVGQFCESCESGFRRETKFGGPFNHCIKCDCHNHSNSCEA). Cystine bridges form between cysteine 736/cysteine 745, cysteine 738/cysteine 752, cysteine 754/cysteine 763, cysteine 766/cysteine 782, cysteine 785/cysteine 803, cysteine 806/cysteine 815, cysteine 818/cysteine 832, cysteine 835/cysteine 849, cysteine 837/cysteine 856, cysteine 859/cysteine 868, cysteine 871/cysteine 887, cysteine 890/cysteine 909, cysteine 892/cysteine 916, cysteine 918/cysteine 927, cysteine 930/cysteine 943, cysteine 946/cysteine 958, cysteine 948/cysteine 965, cysteine 967/cysteine 976, cysteine 979/cysteine 991, cysteine 994/cysteine 1006, cysteine 996/cysteine 1013, cysteine 1015/cysteine 1024, and cysteine 1027/cysteine 1038. The 33-residue stretch at 752–784 (CICEHNTAGDTCERCARGYYGDALQGTEEDCQK) folds into the Laminin EGF-like 6; truncated domain. Laminin EGF-like domains follow at residues 785-834 (CPCP…ECVE), 835-889 (CACS…NCQS), 890-945 (CGCF…GCQE), 946-993 (CNCD…GCQP), and 994-1040 (CDCE…GCLP). Residue asparagine 936 is glycosylated (N-linked (GlcNAc...) asparagine). Asparagine 1077, asparagine 1183, asparagine 1226, asparagine 1259, asparagine 1336, asparagine 1452, and asparagine 1528 each carry an N-linked (GlcNAc...) asparagine glycan.

Functionally, during the formation of neuromuscular junctions at the larval stage, negatively regulates membrane protrusion from body wall muscles, probably downstream of the integrin complex formed by pat-2 and pat-3. This Caenorhabditis elegans protein is Laminin-like protein lam-2 (lam-2).